The sequence spans 144 residues: Large ribosomal subunit protein uL15 (144 aa).

Positions 1-57 (MRLNTLSPAPGSKPSAKRVGRGIGSGLGKTCGRGHKGQKSRSGGSVRPGFEGGQMPL) are disordered. Residues 21-31 (RGIGSGLGKTC) are compositionally biased toward gly residues.

Belongs to the universal ribosomal protein uL15 family. As to quaternary structure, part of the 50S ribosomal subunit.

Its function is as follows. Binds to the 23S rRNA. In Photobacterium profundum (strain SS9), this protein is Large ribosomal subunit protein uL15.